A 656-amino-acid chain; its full sequence is 1-deoxy-D-xylulose-5-phosphate synthase 1 (656 aa).

Residues His73 and 113 to 115 each bind thiamine diphosphate; that span reads SHA. Asp144 lines the Mg(2+) pocket. Residues 145–146, Asn174, Tyr285, and Glu367 contribute to the thiamine diphosphate site; that span reads GA. Asn174 is a Mg(2+) binding site. The tract at residues 625-656 is disordered; that stretch reads AGDRAGGPAVEQPGDGRMSGDGRIVMPAQGEN.

The protein belongs to the transketolase family. DXPS subfamily. In terms of assembly, homodimer. It depends on Mg(2+) as a cofactor. Thiamine diphosphate serves as cofactor.

The catalysed reaction is D-glyceraldehyde 3-phosphate + pyruvate + H(+) = 1-deoxy-D-xylulose 5-phosphate + CO2. The protein operates within metabolic intermediate biosynthesis; 1-deoxy-D-xylulose 5-phosphate biosynthesis; 1-deoxy-D-xylulose 5-phosphate from D-glyceraldehyde 3-phosphate and pyruvate: step 1/1. Its function is as follows. Catalyzes the acyloin condensation reaction between C atoms 2 and 3 of pyruvate and glyceraldehyde 3-phosphate to yield 1-deoxy-D-xylulose-5-phosphate (DXP). This Streptomyces coelicolor (strain ATCC BAA-471 / A3(2) / M145) protein is 1-deoxy-D-xylulose-5-phosphate synthase 1.